The sequence spans 381 residues: Queuine tRNA-ribosyltransferase (381 aa).

D92 (proton acceptor) is an active-site residue. Residues 92 to 96, D146, Q190, and G217 contribute to the substrate site; that span reads DSGGF. Residues 248 to 254 form an RNA binding region; sequence GVGRPED. D267 functions as the Nucleophile in the catalytic mechanism. An RNA binding; important for wobble base 34 recognition region spans residues 272 to 276; that stretch reads TRNAR. Residues C305, C307, C310, and H337 each coordinate Zn(2+).

This sequence belongs to the queuine tRNA-ribosyltransferase family. As to quaternary structure, homodimer. Within each dimer, one monomer is responsible for RNA recognition and catalysis, while the other monomer binds to the replacement base PreQ1. Zn(2+) is required as a cofactor.

The catalysed reaction is 7-aminomethyl-7-carbaguanine + guanosine(34) in tRNA = 7-aminomethyl-7-carbaguanosine(34) in tRNA + guanine. It participates in tRNA modification; tRNA-queuosine biosynthesis. Its function is as follows. Catalyzes the base-exchange of a guanine (G) residue with the queuine precursor 7-aminomethyl-7-deazaguanine (PreQ1) at position 34 (anticodon wobble position) in tRNAs with GU(N) anticodons (tRNA-Asp, -Asn, -His and -Tyr). Catalysis occurs through a double-displacement mechanism. The nucleophile active site attacks the C1' of nucleotide 34 to detach the guanine base from the RNA, forming a covalent enzyme-RNA intermediate. The proton acceptor active site deprotonates the incoming PreQ1, allowing a nucleophilic attack on the C1' of the ribose to form the product. After dissociation, two additional enzymatic reactions on the tRNA convert PreQ1 to queuine (Q), resulting in the hypermodified nucleoside queuosine (7-(((4,5-cis-dihydroxy-2-cyclopenten-1-yl)amino)methyl)-7-deazaguanosine). The chain is Queuine tRNA-ribosyltransferase from Xanthomonas campestris pv. campestris (strain B100).